Consider the following 533-residue polypeptide: Tryptophan 7-halogenase KtzQ (533 aa).

6 residues coordinate FAD: glycine 14, threonine 16, alanine 17, alanine 40, glutamate 50, and alanine 51. Lysine 80 is an active-site residue. Glutamate 359 contributes to the L-tryptophan binding site. Residues threonine 361 and glycine 362 each contribute to the chloride site. Leucine 363 is an FAD binding site. The L-tryptophan site is built by tyrosine 456, tyrosine 457, glutamate 463, and phenylalanine 467.

It belongs to the flavin-dependent halogenase family. Bacterial tryptophan halogenase subfamily.

It catalyses the reaction L-tryptophan + FADH2 + chloride + O2 = 7-chloro-L-tryptophan + FAD + 2 H2O. Functionally, involved in the biosynthesis of kutznerides, actinomycete-derived antifungal and antimicrobial cyclic hexadepsipeptides. Together with KtzR, catalyzes the regiospecific dichlorination of L-tryptophan (L-Trp) to produce 6,7-dichloro-L-tryptophan. KtzQ catalyzes the chlorination of L-Trp at C7 position to yield 7-chlorotryptophan. Can also use 6-chloro-L-tryptophan as substrate and form 6,7-dichloro-L-tryptophan, but has a preference for halogenation at the 7 position of unmodified L-Trp. Cannot use piperazic acid or gamma,delta-dehydropiperazic acid. The protein is Tryptophan 7-halogenase KtzQ of Kutzneria sp. (strain 744).